Reading from the N-terminus, the 904-residue chain is MERAMEHLNVQLNRLTRSLRRARTVELPEDSETAVYTLMPMVMADQHRSVSELLLNSKFDVNYAFGRVKRSLLHIAANCGSVECLVLLLKRGANPNYQDISGCTPLHLAARNGQKKCMGRLLEYNADVNICNNEGLTAIHWLAVNGRTELLHDLVQHVTNVDVEDAMGQTALHVACQNGHKTTVQCLLDSGADINRPNVSGATPLYFACSHGQRDTAQILLLRGAKYLPDRNGVTPLDLCVQGGYGETCEILIQHHGRLFQTLIQMTQNDDIKENMLRQVLEHVSQQNDSNYQRILTSLAEVATTNGHKLLSLSSNFEVQTKSLLRIIRIFCHVFCLGPSSPNNGNDMGYNGNKTPRSQVFKPLELLWHSLDEWLVLISTELEKEITDTTRSSSGNDIASLFLKKQEVDHSVSSENPQLLLDASSVMKTPEVYADGQDVISMIANRLSAVIQAFYMCCSCQMPHGMTSPRFIEFVCKHDEVLKCFVTRNPKIIFNHFHFLLECPELMSRFMHIIKGQPFKDRCEWFYEHLLAGQPDSDMVHRPVNENDILLVHRDSLFRSSCEVVSKSSNEKLKQGIAVRFHGEEGMGQGVVREWFDILSNEIINPDYALFTQSADGTTFQPNSNSSVNPDHLNYFRFAGQILGLALYHRQLVNIYFTRSFYKHILGIPVSYQDVSSIDPEYAKNLQWILDNDISDLGLELTFSVETDVFGTMEEVPLKPGGTTIQVTQDNKEEYVQLVTELRMTRAIQPQINAFLQGFHTFIPPSLIQLFDEYELELLLSGMPEIDVMDWKRNTEYTSGYDLQEPVIQWFWEVVENLTQEERVLLLQFVTGSSRVPHGGFAFLMGGSGLQKFTVAAVPYTSNLLPTSSTCINMLKLPEYPSKDVLRDRLLVALHCGSYGYTMA.

ANK repeat units follow at residues 34-63 (AVYT…DVNY), 68-97 (VKRS…NPNY), 101-130 (SGCT…DVNI), 134-163 (EGLT…NVDV), 167-196 (MGQT…DINR), 200-230 (SGAT…YLPD), and 232-261 (NGVT…RLFQ). In terms of domain architecture, HECT spans 569-904 (SNEKLKQGIA…HCGSYGYTMA (336 aa)). The active-site Glycyl thioester intermediate is the Cys871.

It is found in the golgi apparatus. It localises to the golgi stack membrane. Its subcellular location is the cytoplasm. The protein localises to the endoplasmic reticulum. It catalyses the reaction S-ubiquitinyl-[E2 ubiquitin-conjugating enzyme]-L-cysteine + [acceptor protein]-L-lysine = [E2 ubiquitin-conjugating enzyme]-L-cysteine + N(6)-ubiquitinyl-[acceptor protein]-L-lysine.. It functions in the pathway protein modification; protein ubiquitination. E3 ubiquitin-protein ligase involved in Golgi membrane fusion and regulation of small GTPases. Acts as a regulator of Golgi membrane dynamics during the cell cycle: recruited to Golgi membrane by Rab proteins and regulates postmitotic Golgi membrane fusion. Acts by mediating ubiquitination during mitotic Golgi disassembly, ubiquitination serving as a signal for Golgi reassembly later, after cell division. The sequence is that of E3 ubiquitin-protein ligase HACE1 (hace1) from Danio rerio (Zebrafish).